We begin with the raw amino-acid sequence, 276 residues long: UPF0328 protein ECU03_0010 (276 aa).

2 disordered regions span residues 1 to 132 (MAAP…PIIS) and 156 to 176 (SFCQ…NMVH). Basic and acidic residues predominate over residues 106 to 126 (HTEGCHTHEANPEPNTKHTET).

The protein belongs to the UPF0328 family.

The chain is UPF0328 protein ECU03_0010 from Encephalitozoon cuniculi (strain GB-M1) (Microsporidian parasite).